The chain runs to 105 residues: Small ribosomal subunit protein uS10 (105 aa).

Belongs to the universal ribosomal protein uS10 family. Part of the 30S ribosomal subunit.

Involved in the binding of tRNA to the ribosomes. This Nostoc punctiforme (strain ATCC 29133 / PCC 73102) protein is Small ribosomal subunit protein uS10.